Reading from the N-terminus, the 353-residue chain is Survival factor 2 (353 aa).

Belongs to the SVF1 family.

Its subcellular location is the cytoplasm. The protein localises to the nucleus. In Schizosaccharomyces pombe (strain 972 / ATCC 24843) (Fission yeast), this protein is Survival factor 2 (svf2).